A 473-amino-acid polypeptide reads, in one-letter code: MNAAVIDSKNSQDFIVADMSLADWGRKELNIAETEMPGLVQTREEYKVQQPLKGARIAGSLHMTIQTGVLIETLTALGADVRWASCNIFSTQDHAAAAIAKAGTPVFAFKGESLDEYWEFSHRIFEWPNGEFANMILDDGGDATLLLILGSKAEKDRSVISKPTNEEEVALYKSIERHLDADPTWYSTRLAHIKGVTEETTTGVHRLYQMEKEGRLPFPAINVNDSVTKSKFDNLYGCRESLVDGIKRATDVMIAGKIAVVAGYGDVGKGCAQSLRGLGATVWVTEIDPICALQAAMEGYRVVTMEYAADKADIFVTATGNYHVIGHDHMKAMRHNAIVCNIGHFDSEIDVASTRQYQWDNIKPQVDHIIFPDGKRVILLAEGRLVNLGCATGHPSFVMSNSFTNQTLAQIELFTQGNKYENKVYVLPKHLDEKVARLHLARIGANLTVLSDEQAGYIGVDKNGPFKPNHYRY.

Positions 64, 139, and 199 each coordinate substrate. 200–202 (TTT) contacts NAD(+). Residues K229 and D233 each coordinate substrate. Residues N234, 263–268 (GYGDVG), E286, N321, 342–344 (IGH), and N387 each bind NAD(+).

The protein belongs to the adenosylhomocysteinase family. Requires NAD(+) as cofactor.

Its subcellular location is the cytoplasm. The enzyme catalyses S-adenosyl-L-homocysteine + H2O = L-homocysteine + adenosine. Its pathway is amino-acid biosynthesis; L-homocysteine biosynthesis; L-homocysteine from S-adenosyl-L-homocysteine: step 1/1. Functionally, may play a key role in the regulation of the intracellular concentration of adenosylhomocysteine. The polypeptide is Adenosylhomocysteinase (Paraburkholderia xenovorans (strain LB400)).